Reading from the N-terminus, the 724-residue chain is Probable serine/threonine-protein kinase KKQ8 (724 aa).

Disordered stretches follow at residues 1–81 (MVMQ…RQRS) and 93–188 (HPFR…KDIL). Serine 19 carries the post-translational modification Phosphoserine. Residues 45 to 54 (PYRSSSTSPK) are compositionally biased toward low complexity. The span at 95 to 106 (FRQTGSGASNSP) shows a compositional bias: polar residues. Low complexity predominate over residues 143–162 (RSSSVSSCDSSNGTTSSSDS). Phosphoserine occurs at positions 232, 238, and 241. Composition is skewed to polar residues over residues 318–329 (NASSLLPNVEKS) and 338–351 (GQSP…SPTQ). The disordered stretch occupies residues 318–355 (NASSLLPNVEKSQTNHEKRTGQSPNDSNRSSPTQGRED). The 301-residue stretch at 412 to 712 (GHPVGLVGAG…VGKLLDMQWM (301 aa)) folds into the Protein kinase domain. ATP-binding positions include 418-426 (VGAGAYGEV) and lysine 455. The active-site Proton acceptor is the aspartate 563.

It belongs to the protein kinase superfamily. CAMK Ser/Thr protein kinase family. NPR/HAL subfamily. HAL5 sub-subfamily.

It localises to the cytoplasm. The catalysed reaction is L-seryl-[protein] + ATP = O-phospho-L-seryl-[protein] + ADP + H(+). It carries out the reaction L-threonyl-[protein] + ATP = O-phospho-L-threonyl-[protein] + ADP + H(+). The protein is Probable serine/threonine-protein kinase KKQ8 (KKQ8) of Saccharomyces cerevisiae (strain YJM789) (Baker's yeast).